A 418-amino-acid polypeptide reads, in one-letter code: UPF0261 protein BMEII0128 (418 aa).

The protein belongs to the UPF0261 family.

This Brucella melitensis biotype 1 (strain ATCC 23456 / CCUG 17765 / NCTC 10094 / 16M) protein is UPF0261 protein BMEII0128.